Reading from the N-terminus, the 104-residue chain is Protein RnfH (104 aa).

Belongs to the UPF0125 (RnfH) family.

In Pseudomonas savastanoi pv. phaseolicola (strain 1448A / Race 6) (Pseudomonas syringae pv. phaseolicola (strain 1448A / Race 6)), this protein is Protein RnfH.